The following is a 167-amino-acid chain: Seroin (167 aa).

A signal peptide spans 1 to 17 (MATKILIFLSFVALSSA). The N-linked (GlcNAc...) asparagine glycan is linked to Asn-26. 5 tandem repeats follow at residues 38–46 (PPLPQPPPL), 56–64 (PPLPQPPPL), 76–78 (PPI), 79–81 (PPI), and 82–84 (PPI). The disordered stretch occupies residues 145–167 (VNETIVGDNPPKFEESRKESSSN). Asn-146 carries an N-linked (GlcNAc...) asparagine glycan. The span at 155-167 (PKFEESRKESSSN) shows a compositional bias: basic and acidic residues.

Produced by both the posterior (PSG) and middle (MSG) sections of silk glands.

The protein localises to the secreted. The protein is Seroin of Galleria mellonella (Greater wax moth).